The primary structure comprises 238 residues: MSDKKRVLVKFSGEALAGGNGFGIDTHILKYIAGEIKGLVLNGIEIGIVIGGGNIIRGVSAAKDGIIKRTSGDHMGMLATVINAIAMREALEYSGLSVRVQSAIKMEAICETFIMGRAQRHLEKGRVVIFAAGTGNPFFTTDTAATLRAIEIDANMIIKATKVNGVYDRDPMKFEDAVLLNEISYERAMEDNIKVMDDTAIALAKDNKLPIVVCNMFEEGNLLKIANGDYTNCSVVKN.

10–13 (KFSG) provides a ligand contact to ATP. The tract at residues 18–23 (GGNGFG) is involved in allosteric activation by GTP. G52 contacts UMP. Residues G53 and R57 each contribute to the ATP site. Residues D73 and 134–141 (TGNPFFTT) each bind UMP. ATP is bound by residues T161, Y167, and D170.

Belongs to the UMP kinase family. In terms of assembly, homohexamer.

Its subcellular location is the cytoplasm. The enzyme catalyses UMP + ATP = UDP + ADP. The protein operates within pyrimidine metabolism; CTP biosynthesis via de novo pathway; UDP from UMP (UMPK route): step 1/1. With respect to regulation, allosterically activated by GTP. Inhibited by UTP. In terms of biological role, catalyzes the reversible phosphorylation of UMP to UDP. In Campylobacter fetus subsp. fetus (strain 82-40), this protein is Uridylate kinase.